A 618-amino-acid chain; its full sequence is UvrABC system protein C (618 aa).

Residues 20–98 enclose the GIY-YIG domain; that stretch reads TAPGVYRMYA…IKSLSPRYNV (79 aa). Residues 207 to 242 form the UVR domain; that stretch reads DQLGEEIMQSMQQASEALEFERAARLRDLLSSLRSM.

This sequence belongs to the UvrC family. In terms of assembly, interacts with UvrB in an incision complex.

It localises to the cytoplasm. The UvrABC repair system catalyzes the recognition and processing of DNA lesions. UvrC both incises the 5' and 3' sides of the lesion. The N-terminal half is responsible for the 3' incision and the C-terminal half is responsible for the 5' incision. This chain is UvrABC system protein C, found in Xanthomonas oryzae pv. oryzae (strain MAFF 311018).